Consider the following 576-residue polypeptide: 4-alpha-glucanotransferase, chloroplastic/amyloplastic (576 aa).

The N-terminal 52 residues, 1–52 (MAIHTCFSLIPSSFSSPKLPYPKNTTFQSPIPKLSRPTFMFDRKGSFQNGTA), are a transit peptide targeting the chloroplast.

It belongs to the disproportionating enzyme family. As to expression, present in leaves, stems, roots, and stolons but is most abundant in developing and mature tubers.

Its subcellular location is the plastid. It localises to the chloroplast. It is found in the amyloplast. The enzyme catalyses Transfers a segment of a (1-&gt;4)-alpha-D-glucan to a new position in an acceptor, which may be glucose or a (1-&gt;4)-alpha-D-glucan.. In terms of biological role, may act during starch breakdown to convert small oligosaccharides into larger molecules upon which starch phosphorylase can act, or may change the structure of starch molecules and grain architecture by modifying chain length, or may generate from starch and glucose oligosaccharides which can serve either as primers for new starch phosphoenzyme. The sequence is that of 4-alpha-glucanotransferase, chloroplastic/amyloplastic (DPEP) from Solanum tuberosum (Potato).